A 185-amino-acid polypeptide reads, in one-letter code: Ribosome-recycling factor (185 aa).

The protein belongs to the RRF family.

The protein localises to the cytoplasm. Its function is as follows. Responsible for the release of ribosomes from messenger RNA at the termination of protein biosynthesis. May increase the efficiency of translation by recycling ribosomes from one round of translation to another. The chain is Ribosome-recycling factor from Corynebacterium glutamicum (strain ATCC 13032 / DSM 20300 / JCM 1318 / BCRC 11384 / CCUG 27702 / LMG 3730 / NBRC 12168 / NCIMB 10025 / NRRL B-2784 / 534).